The sequence spans 1379 residues: Hepatocyte growth factor receptor (1379 aa).

The first 24 residues, 1-24 (MKAPTVLAPGILVLLLSLVQRSHG), serve as a signal peptide directing secretion. The Extracellular segment spans residues 25 to 931 (ECKEALVKSE…VIVQPDQNFA (907 aa)). The Sema domain maps to 27–514 (KEALVKSEMN…TGKKITKIPL (488 aa)). A glycan (N-linked (GlcNAc...) asparagine) is linked at N45. 4 disulfide bridges follow: C95-C101, C98-C160, C133-C141, and C171-C174. N-linked (GlcNAc...) asparagine glycosylation occurs at N106. 2 N-linked (GlcNAc...) asparagine glycosylation sites follow: N201 and N357. 2 disulfides stabilise this stretch: C297-C362 and C384-C396. N-linked (GlcNAc...) asparagine glycosylation is found at N398 and N404. 4 disulfide bridges follow: C519-C537, C525-C560, C528-C544, and C540-C550. IPT/TIG domains are found at residues 562–654 (PAVY…FSYV), 656–738 (PVIT…FSYR), and 741–835 (PVVY…LTYV). T581 is a glycosylation site (O-linked (Man) threonine). N-linked (GlcNAc...) asparagine glycans are attached at residues N606 and N634. 2 O-linked (Man) threonine glycosylation sites follow: T675 and T760. N784 and N878 each carry an N-linked (GlcNAc...) asparagine glycan. The chain crosses the membrane as a helical span at residues 932–954 (GLIIGAVSISVVVLLLSGLFLWM). At 955–1379 (RKRKHKDLGS…QDNIDGEGNT (425 aa)) the chain is on the cytoplasmic side. Position 964 is a phosphoserine (S964). T975 carries the post-translational modification Phosphothreonine. A phosphoserine mark is found at S988, S995, and S998. The residue at position 1001 (Y1001) is a Phosphotyrosine. Residues 1076–1343 (VHFNEVIGRG…RISSIFSTFI (268 aa)) form the Protein kinase domain. ATP is bound by residues 1082 to 1090 (IGRGHFGCV) and K1108. Residue D1202 is the Proton acceptor of the active site. Positions 1210-1379 (LDEKFTVKVA…QDNIDGEGNT (170 aa)) are interaction with RANBP9. At Y1228 the chain carries Phosphotyrosine. 2 positions are modified to phosphotyrosine; by autocatalysis: Y1232 and Y1233. At T1287 the chain carries Phosphothreonine. The segment at 1318–1357 (WHPKAEMRPSFSELVSRISSIFSTFIGEHYVHVNATYVNV) is interaction with MUC20. A phosphotyrosine; by autocatalysis mark is found at Y1347 and Y1354. Y1363 is modified (phosphotyrosine).

Belongs to the protein kinase superfamily. Tyr protein kinase family. As to quaternary structure, heterodimer made of an alpha chain (50 kDa) and a beta chain (145 kDa) which are disulfide linked. Binds PLXNB1. Interacts when phosphorylated with downstream effectors including STAT3, PIK3R1, SRC, PCLG1, GRB2 and GAB1. When phosphorylated at Tyr-1354, interacts with INPPL1/SHIP2. Interacts with RANBP9 and RANBP10. Interacts with INPP5D/SHIP1. Interacts with SPSB1, SPSB2, SPSB4 and probably SPSB3. SPSB1 binding occurs in the presence and in the absence of HGF, however HGF treatment has a positive effect on this interaction. Interacts with MUC20; prevents interaction with GRB2 and suppresses hepatocyte growth factor-induced cell proliferation. Interacts with GRB10. Interacts with PTPN1 and PTPN2. Interacts with HSP90AA1 and HSP90AB1; the interaction suppresses MET kinase activity. Interacts with tensin TNS3. Interacts (when phosphorylated) with tensin TNS4 (via SH2 domain); the interaction increases MET protein stability by inhibiting MET endocytosis and subsequent lysosomal degradation. In terms of assembly, (Microbial infection) Interacts with L.monocytogenes InlB. InlB probably dimerizes upon binding to MET, which encourages subsequent dimerization of MET. Autophosphorylated in response to ligand binding on Tyr-1232 and Tyr-1233 in the kinase domain leading to further phosphorylation of Tyr-1347 and Tyr-1354 in the C-terminal multifunctional docking site. Dephosphorylated by PTPRJ at Tyr-1347 and Tyr-1363. Dephosphorylated by PTPN1 and PTPN2. Post-translationally, ubiquitinated. Ubiquitination by CBL regulates MET endocytosis, resulting in decreasing plasma membrane receptor abundance, and in endosomal degradation and/or recycling of internalized receptors. In terms of processing, O-mannosylation of IPT/TIG domains by TMEM260 is required for protein maturation. O-mannosylated residues are composed of single mannose glycans that are not elongated or modified. (Microbial infection) Tyrosine phosphorylation is stimulated by L.monocytogenes InlB.

It localises to the membrane. It carries out the reaction L-tyrosyl-[protein] + ATP = O-phospho-L-tyrosyl-[protein] + ADP + H(+). In its inactive state, the C-terminal tail interacts with the catalytic domain and inhibits the kinase activity. Upon ligand binding, the C-terminal tail is displaced and becomes phosphorylated, thus increasing the kinase activity. In terms of biological role, receptor tyrosine kinase that transduces signals from the extracellular matrix into the cytoplasm by binding to hepatocyte growth factor/HGF ligand. Regulates many physiological processes including proliferation, scattering, morphogenesis and survival. Ligand binding at the cell surface induces autophosphorylation of MET on its intracellular domain that provides docking sites for downstream signaling molecules. Following activation by ligand, interacts with the PI3-kinase subunit PIK3R1, PLCG1, SRC, GRB2, STAT3 or the adapter GAB1. Recruitment of these downstream effectors by MET leads to the activation of several signaling cascades including the RAS-ERK, PI3 kinase-AKT, or PLCgamma-PKC. The RAS-ERK activation is associated with the morphogenetic effects while PI3K/AKT coordinates prosurvival effects. During embryonic development, MET signaling plays a role in gastrulation, development and migration of neuronal precursors, angiogenesis and kidney formation. During skeletal muscle development, it is crucial for the migration of muscle progenitor cells and for the proliferation of secondary myoblasts. In adults, participates in wound healing as well as organ regeneration and tissue remodeling. Also promotes differentiation and proliferation of hematopoietic cells. May regulate cortical bone osteogenesis. Functionally, (Microbial infection) Acts as a receptor for Listeria monocytogenes internalin InlB, mediating entry of the pathogen into cells. The protein is Hepatocyte growth factor receptor (Met) of Mus musculus (Mouse).